A 437-amino-acid polypeptide reads, in one-letter code: GTPase Obg (437 aa).

Residues 2–160 (SMFLDTAKIS…RQLELELKIL (159 aa)) form the Obg domain. The region spanning 161–338 (ADVGLVGFPS…LLEATAELLA (178 aa)) is the OBG-type G domain. Residues 167 to 174 (GFPSVGKS), 192 to 196 (FTTIV), 214 to 217 (DLPG), 284 to 287 (NKMD), and 319 to 321 (SSL) each bind GTP. The Mg(2+) site is built by Ser174 and Thr194. Residues 359–437 (GFAETEKDFE…IGKFEFEFVD (79 aa)) enclose the OCT domain.

The protein belongs to the TRAFAC class OBG-HflX-like GTPase superfamily. OBG GTPase family. Monomer. Mg(2+) is required as a cofactor.

Its subcellular location is the cytoplasm. Functionally, an essential GTPase which binds GTP, GDP and possibly (p)ppGpp with moderate affinity, with high nucleotide exchange rates and a fairly low GTP hydrolysis rate. Plays a role in control of the cell cycle, stress response, ribosome biogenesis and in those bacteria that undergo differentiation, in morphogenesis control. The sequence is that of GTPase Obg from Streptococcus pyogenes serotype M5 (strain Manfredo).